Consider the following 245-residue polypeptide: MKAGVAQQRSLLELAKLDAELTRIAHRATHLPQRAAYQQVQAEHNAANDRMAALRIAAEDLDGQVSRFESEIDAVRKRGDRDRSLLTSGATDAKQLADLQHELDSLQRRQASLEDALLEVLERREELQAQQTAESRALQALRADLAAAQQALDEALAEIDQARHQHSSQRDMLTATLDPELAGLYERQRAGGGPGAGRLQGHRCGACRIEIGRGELAQISAAAEDEVVRCPECGAILLRLEGFEE.

Residues 33 to 176 (QRAAYQQVQA…SSQRDMLTAT (144 aa)) are a coiled coil.

This is an uncharacterized protein from Mycobacterium tuberculosis (strain CDC 1551 / Oshkosh).